The chain runs to 21 residues: 71 kDa F-actin-binding protein (21 aa).

The protein to yeast fimbrin. Post-translationally, the N-terminus is blocked.

In terms of biological role, binds directly to F-actin and induces actin filament bundling. May function as a regulator of actin filament organization. This chain is 71 kDa F-actin-binding protein, found in Tetrahymena pyriformis.